The following is a 194-amino-acid chain: Large ribosomal subunit protein uL5 (194 aa).

Belongs to the universal ribosomal protein uL5 family. In terms of assembly, part of the 50S ribosomal subunit; part of the 5S rRNA/L5/L18/L25 subcomplex. Contacts the 5S rRNA and the P site tRNA. Forms a bridge to the 30S subunit in the 70S ribosome.

Its function is as follows. This is one of the proteins that bind and probably mediate the attachment of the 5S RNA into the large ribosomal subunit, where it forms part of the central protuberance. In the 70S ribosome it contacts protein S13 of the 30S subunit (bridge B1b), connecting the 2 subunits; this bridge is implicated in subunit movement. Contacts the P site tRNA; the 5S rRNA and some of its associated proteins might help stabilize positioning of ribosome-bound tRNAs. This Chlorobium luteolum (strain DSM 273 / BCRC 81028 / 2530) (Pelodictyon luteolum) protein is Large ribosomal subunit protein uL5.